A 446-amino-acid polypeptide reads, in one-letter code: Glutamyl-tRNA reductase (446 aa).

Substrate is bound by residues 49 to 52, serine 109, 114 to 116, and glutamine 120; these read TCNR and ETQ. Cysteine 50 (nucleophile) is an active-site residue. 189–194 contributes to the NADP(+) binding site; sequence GAGEMA.

This sequence belongs to the glutamyl-tRNA reductase family. Homodimer.

It carries out the reaction (S)-4-amino-5-oxopentanoate + tRNA(Glu) + NADP(+) = L-glutamyl-tRNA(Glu) + NADPH + H(+). Its pathway is porphyrin-containing compound metabolism; protoporphyrin-IX biosynthesis; 5-aminolevulinate from L-glutamyl-tRNA(Glu): step 1/2. Its function is as follows. Catalyzes the NADPH-dependent reduction of glutamyl-tRNA(Glu) to glutamate 1-semialdehyde (GSA). The sequence is that of Glutamyl-tRNA reductase from Macrococcus caseolyticus (strain JCSC5402) (Macrococcoides caseolyticum).